A 588-amino-acid polypeptide reads, in one-letter code: MIQHPRIGIRPTIDGRRQGVRESLEVQTMNMAKSVADLISSTLKYPDGEPVECVISPSTIGRVPEAAASHELFKKSNVCATITVTPCWCYGSETMDMSPDIPHAIWGFNGTERPGAVYLAAVLASHTQKGIPAFGIYGRDVQEANDTAIPEDVKEKLLRYARAALATGLMRDTAYLSMGSVSMGIGGSIVNPDFFQEYLGMRNESVDMTEFTRRMDRGIYDPEEFERALKWVKENVKEGFDHNREDLVLSREEKDRQWEFVIKMFMIGRDLMVGNPRLAELGFEEEAVGHHALVAGFQGQRQWTDHFPNGDFMETFLNTQFDWNGIRKPFVFATENDSLNGVSMLFNYLLTNTPQIFADVRTYWSPEAVERVTGYTLEGRAAAGFLHLINSGSCTLDGTGQATRDGKPVMKPFWELDESEVQAMLENTDFPPANREYFRGGGFSTRFLTKGDMPVTMVRLNLLKGVGPVLQIAEGYTLELPEDVHHTLDNRTDPGWPTTWFAPRLTGKGAFKSVYDVMNNWGANHGAITYGHIGADLITLASMLRIPVNMHNVPEEDIFRPKNWSLFGTEDLESADYRACQLLGPLHK.

Catalysis depends on proton acceptor residues Glu335 and Asp359. Glu335, Asp359, and His525 together coordinate Mn(2+).

The protein belongs to the L-fucose isomerase family. Mn(2+) is required as a cofactor.

Its subcellular location is the cytoplasm. The catalysed reaction is L-fucose = L-fuculose. It functions in the pathway carbohydrate degradation; L-fucose degradation; L-lactaldehyde and glycerone phosphate from L-fucose: step 1/3. Its function is as follows. Converts the aldose L-fucose into the corresponding ketose L-fuculose. This Streptococcus pneumoniae (strain P1031) protein is L-fucose isomerase.